The chain runs to 154 residues: uncharacterized protein (154 aa).

3 consecutive transmembrane segments (helical) span residues 26–48 (VSGW…GVVT), 97–119 (IAMF…LIVF), and 132–150 (GLYT…YCAW).

The protein resides in the cell membrane. This is an uncharacterized protein from Archaeoglobus fulgidus (strain ATCC 49558 / DSM 4304 / JCM 9628 / NBRC 100126 / VC-16).